The chain runs to 647 residues: Threonine--tRNA ligase (647 aa).

One can recognise a TGS domain in the interval 1–61; the sequence is MINITFPDGA…TEDGSIEIVT (61 aa). A catalytic region spans residues 242–540; sequence DHRKLGKELD…LIENYKGAFP (299 aa). Positions 336, 387, and 517 each coordinate Zn(2+).

It belongs to the class-II aminoacyl-tRNA synthetase family. In terms of assembly, homodimer. Zn(2+) serves as cofactor.

Its subcellular location is the cytoplasm. The enzyme catalyses tRNA(Thr) + L-threonine + ATP = L-threonyl-tRNA(Thr) + AMP + diphosphate + H(+). In terms of biological role, catalyzes the attachment of threonine to tRNA(Thr) in a two-step reaction: L-threonine is first activated by ATP to form Thr-AMP and then transferred to the acceptor end of tRNA(Thr). Also edits incorrectly charged L-seryl-tRNA(Thr). The sequence is that of Threonine--tRNA ligase from Streptococcus pneumoniae (strain P1031).